Reading from the N-terminus, the 368-residue chain is Mitogen-activated protein kinase KSS1 (368 aa).

Residues 13 to 313 (YKLVDLIGEG…AAEALRHPYL (301 aa)) form the Protein kinase domain. Residues 19 to 27 (IGEGAYGTV) and lysine 42 contribute to the ATP site. Aspartate 143 (proton acceptor) is an active-site residue. At threonine 183 the chain carries Phosphothreonine. The short motif at 183-185 (TEY) is the TXY element. Position 185 is a phosphotyrosine (tyrosine 185).

The protein belongs to the protein kinase superfamily. Ser/Thr protein kinase family. MAP kinase subfamily. HOG1 sub-subfamily. In the nucleus, KSS1 forms a complex with DIG1, DIG2 and STE12; in contrast to FUS3 the interaction of KSS1 with STE12 does not depend on DIG1 and DIG2. Phosphorylated KSS1 shows reduced interaction with STE12. During pheromone activation and phosphorylation, KSS1 forms a membrane-associated complex with the scaffold protein STE5, the MAPKK STE7, the MAPKKK STE11, and the G-protein beta subunit GBB/STE4; interacting directly with POF1, STE7 and STE5 proteins. Requires Mg(2+) as cofactor. In terms of processing, dually phosphorylated on Thr-183 and Tyr-185 by STE7 in response to pheromone or carbon/nitrogen limitation, which activates the enzyme. Activated FUS3 down-regulates KSS1 phosphorylation.

The protein localises to the nucleus. It localises to the cytoplasm. Its subcellular location is the periplasm. The enzyme catalyses L-seryl-[protein] + ATP = O-phospho-L-seryl-[protein] + ADP + H(+). It carries out the reaction L-threonyl-[protein] + ATP = O-phospho-L-threonyl-[protein] + ADP + H(+). With respect to regulation, activated by tyrosine and threonine phosphorylation after pheromone treatment or carbon/nitrogen limitation. Its function is as follows. Together with closely related FUS3, KSS1 is the final kinase in the signal transduction cascade regulating activation/repression of the mating and filamentation pathways, induced by pheromone and nitrogen/carbon limitation, respectively. Phosphorylated KSS1 activates both pathways, whereas activated FUS3 activates the mating but suppresses the filamentation pathway. KSS1 activity is down-regulated by FUS3 during pheromone induction to prevent inappropriate activation of the filamentation pathway. During induction of filamentation, KSS1 activates the transcription factor STE12 resulting in its binding to and activation of filamentation specific genes. Non-activated KSS1 has a kinase-independent repressive effect on STE12 transcriptional activity, that is mediated by direct binding to STE12 and depends on the presence of DIG1 and DIG2, and that is required for the suppression of filamentation under normal growth conditions. SSN3/SRB10 contributes further to the suppression of filamentation under these conditions by reducing STE12 stability independent of KSS1. FUS3 can partially compensate for the lack of KSS1 but filamentation becomes constitutively induced at a low level in the absence of any signal. KSS1 phosphorylates STE7, STE5, FAR1, DIG1, DIG2, STE12, and SST2. In Saccharomyces cerevisiae (strain ATCC 204508 / S288c) (Baker's yeast), this protein is Mitogen-activated protein kinase KSS1 (KSS1).